The primary structure comprises 462 residues: A-type ATP synthase subunit B (462 aa).

This sequence belongs to the ATPase alpha/beta chains family. In terms of assembly, has multiple subunits with at least A(3), B(3), C, D, E, F, H, I and proteolipid K(x).

It localises to the cell membrane. In terms of biological role, component of the A-type ATP synthase that produces ATP from ADP in the presence of a proton gradient across the membrane. The B chain is a regulatory subunit. In Methanococcus maripaludis (strain DSM 14266 / JCM 13030 / NBRC 101832 / S2 / LL), this protein is A-type ATP synthase subunit B.